We begin with the raw amino-acid sequence, 184 residues long: Glutathione-regulated potassium-efflux system ancillary protein KefG (184 aa).

This sequence belongs to the NAD(P)H dehydrogenase (quinone) family. KefG subfamily. As to quaternary structure, interacts with KefB.

The protein resides in the cell inner membrane. It carries out the reaction a quinone + NADH + H(+) = a quinol + NAD(+). It catalyses the reaction a quinone + NADPH + H(+) = a quinol + NADP(+). Its function is as follows. Regulatory subunit of a potassium efflux system that confers protection against electrophiles. Required for full activity of KefB. The polypeptide is Glutathione-regulated potassium-efflux system ancillary protein KefG (Cronobacter sakazakii (strain ATCC BAA-894) (Enterobacter sakazakii)).